Here is a 406-residue protein sequence, read N- to C-terminus: Bifunctional enzyme IspD/IspF (406 aa).

The segment at 1-247 (MSLIRVNGEA…TLFFNPAKDT (247 aa)) is 2-C-methyl-D-erythritol 4-phosphate cytidylyltransferase. Positions 248–406 (FIGMGFDTHA…HVSMRYKQKL (159 aa)) are 2-C-methyl-D-erythritol 2,4-cyclodiphosphate synthase. Asp-254 and His-256 together coordinate a divalent metal cation. 4-CDP-2-C-methyl-D-erythritol 2-phosphate is bound by residues 254-256 (DTH) and 280-281 (HS). An a divalent metal cation-binding site is contributed by His-288. Residues 302-304 (DIG), 307-311 (FPDND), 378-381 (TTME), Phe-385, and Lys-388 contribute to the 4-CDP-2-C-methyl-D-erythritol 2-phosphate site.

It in the N-terminal section; belongs to the IspD/TarI cytidylyltransferase family. IspD subfamily. In the C-terminal section; belongs to the IspF family. A divalent metal cation serves as cofactor.

The catalysed reaction is 2-C-methyl-D-erythritol 4-phosphate + CTP + H(+) = 4-CDP-2-C-methyl-D-erythritol + diphosphate. It carries out the reaction 4-CDP-2-C-methyl-D-erythritol 2-phosphate = 2-C-methyl-D-erythritol 2,4-cyclic diphosphate + CMP. Its pathway is isoprenoid biosynthesis; isopentenyl diphosphate biosynthesis via DXP pathway; isopentenyl diphosphate from 1-deoxy-D-xylulose 5-phosphate: step 2/6. It participates in isoprenoid biosynthesis; isopentenyl diphosphate biosynthesis via DXP pathway; isopentenyl diphosphate from 1-deoxy-D-xylulose 5-phosphate: step 4/6. Its function is as follows. Bifunctional enzyme that catalyzes the formation of 4-diphosphocytidyl-2-C-methyl-D-erythritol from CTP and 2-C-methyl-D-erythritol 4-phosphate (MEP) (IspD), and catalyzes the conversion of 4-diphosphocytidyl-2-C-methyl-D-erythritol 2-phosphate (CDP-ME2P) to 2-C-methyl-D-erythritol 2,4-cyclodiphosphate (ME-CPP) with a corresponding release of cytidine 5-monophosphate (CMP) (IspF). This is Bifunctional enzyme IspD/IspF from Helicobacter pylori (strain ATCC 700392 / 26695) (Campylobacter pylori).